The primary structure comprises 257 residues: Septu protein PtuB (257 aa).

Residues 49–96 (CVYCECRLDEESKYMEVEHFLPKDTYPNLVVNWRNLLPSCKRCNGKKG) enclose the HNH domain.

In terms of biological role, component of antiviral defense system Septu type I, composed of PtuA and PtuB. Expression of Septu type I in B.subtilis (strain BEST7003) confers resistance to phages SBSphiC and SBSphiJ. May be a nuclease. The protein is Septu protein PtuB of Bacillus thuringiensis.